The chain runs to 131 residues: Increased copper sensitivity protein 3 (131 aa).

The next 2 helical transmembrane spans lie at 35–55 (ISVLHLLIATLCTIFFPIFFS) and 74–94 (IALTMSFPLNAIPGMYLIIAF).

Its subcellular location is the membrane. The polypeptide is Increased copper sensitivity protein 3 (ICS3) (Saccharomyces cerevisiae (strain ATCC 204508 / S288c) (Baker's yeast)).